We begin with the raw amino-acid sequence, 695 residues long: Elongation factor G (695 aa).

The tr-type G domain occupies 5 to 280; sequence SHYRNIGIFA…AVIDFLPSPT (276 aa). Residues 14–21, 78–82, and 132–135 each bind GTP; these read AHVDAGKT, DTPGH, and NKLD. Residues 279–299 form a disordered region; the sequence is PTEVDPQPLTDEETGEPTGEV.

Belongs to the TRAFAC class translation factor GTPase superfamily. Classic translation factor GTPase family. EF-G/EF-2 subfamily.

It is found in the cytoplasm. Its function is as follows. Catalyzes the GTP-dependent ribosomal translocation step during translation elongation. During this step, the ribosome changes from the pre-translocational (PRE) to the post-translocational (POST) state as the newly formed A-site-bound peptidyl-tRNA and P-site-bound deacylated tRNA move to the P and E sites, respectively. Catalyzes the coordinated movement of the two tRNA molecules, the mRNA and conformational changes in the ribosome. The chain is Elongation factor G from Alteromonas mediterranea (strain DSM 17117 / CIP 110805 / LMG 28347 / Deep ecotype).